A 200-amino-acid polypeptide reads, in one-letter code: 3-isopropylmalate dehydratase small subunit (200 aa).

This sequence belongs to the LeuD family. LeuD type 1 subfamily. Heterodimer of LeuC and LeuD.

It catalyses the reaction (2R,3S)-3-isopropylmalate = (2S)-2-isopropylmalate. It participates in amino-acid biosynthesis; L-leucine biosynthesis; L-leucine from 3-methyl-2-oxobutanoate: step 2/4. Functionally, catalyzes the isomerization between 2-isopropylmalate and 3-isopropylmalate, via the formation of 2-isopropylmaleate. The chain is 3-isopropylmalate dehydratase small subunit from Yersinia pseudotuberculosis serotype I (strain IP32953).